Reading from the N-terminus, the 260-residue chain is Ribosomal RNA small subunit methyltransferase G (260 aa).

The disordered stretch occupies residues 1 to 45 (MKQRGPAGGRSSSPKPSAPGSGAGEGPDGRSAPASQKINKASAND). Low complexity predominate over residues 9–20 (GRSSSPKPSAPG). Positions 33 to 45 (PASQKINKASAND) are enriched in polar residues. S-adenosyl-L-methionine contacts are provided by glycine 123, phenylalanine 128, and arginine 193.

The protein belongs to the methyltransferase superfamily. RNA methyltransferase RsmG family.

The protein resides in the cytoplasm. It catalyses the reaction guanosine(527) in 16S rRNA + S-adenosyl-L-methionine = N(7)-methylguanosine(527) in 16S rRNA + S-adenosyl-L-homocysteine. Functionally, specifically methylates the N7 position of guanine in position 527 of 16S rRNA. This chain is Ribosomal RNA small subunit methyltransferase G, found in Bradyrhizobium diazoefficiens (strain JCM 10833 / BCRC 13528 / IAM 13628 / NBRC 14792 / USDA 110).